The chain runs to 206 residues: Guanylate kinase (206 aa).

A Guanylate kinase-like domain is found at 4 to 182 (ANLFIISAPS…AVQNLIHIIS (179 aa)). 11–18 (APSGAGKT) contacts ATP.

The protein belongs to the guanylate kinase family.

Its subcellular location is the cytoplasm. It catalyses the reaction GMP + ATP = GDP + ADP. Functionally, essential for recycling GMP and indirectly, cGMP. In Coxiella burnetii (strain RSA 493 / Nine Mile phase I), this protein is Guanylate kinase.